The primary structure comprises 369 residues: DNA replication and repair protein RecF (369 aa).

ATP is bound at residue 30–37; sequence GDNGSGKT.

Belongs to the RecF family.

The protein localises to the cytoplasm. In terms of biological role, the RecF protein is involved in DNA metabolism; it is required for DNA replication and normal SOS inducibility. RecF binds preferentially to single-stranded, linear DNA. It also seems to bind ATP. The chain is DNA replication and repair protein RecF from Pseudomonas aeruginosa (strain LESB58).